Reading from the N-terminus, the 404-residue chain is Probable thioredoxin reductase ARB_06224 (404 aa).

The signal sequence occupies residues 1-22; that stretch reads MGVQRLALALIAFTSALTSVIA. 67 to 75 is an FAD binding site; that stretch reads DEGIYRNGA. A disulfide bridge connects residues Cys-172 and Cys-175. Asn-213 carries an N-linked (GlcNAc...) asparagine glycan. Position 334–343 (334–343) interacts with FAD; it reads DANNDGSTNG.

This sequence belongs to the class-II pyridine nucleotide-disulfide oxidoreductase family. As to quaternary structure, homodimer. The cofactor is FAD.

It is found in the secreted. The enzyme catalyses [thioredoxin]-dithiol + NADP(+) = [thioredoxin]-disulfide + NADPH + H(+). The polypeptide is Probable thioredoxin reductase ARB_06224 (Arthroderma benhamiae (strain ATCC MYA-4681 / CBS 112371) (Trichophyton mentagrophytes)).